A 167-amino-acid polypeptide reads, in one-letter code: Endoribonuclease YbeY (167 aa).

Zn(2+)-binding residues include His-132, His-136, and His-142.

Belongs to the endoribonuclease YbeY family. Zn(2+) serves as cofactor.

It is found in the cytoplasm. Functionally, single strand-specific metallo-endoribonuclease involved in late-stage 70S ribosome quality control and in maturation of the 3' terminus of the 16S rRNA. This Clostridium beijerinckii (strain ATCC 51743 / NCIMB 8052) (Clostridium acetobutylicum) protein is Endoribonuclease YbeY.